We begin with the raw amino-acid sequence, 172 residues long: 3-hydroxydecanoyl-[acyl-carrier-protein] dehydratase (172 aa).

His-71 is a catalytic residue.

Belongs to the thioester dehydratase family. FabA subfamily. In terms of assembly, homodimer.

The protein localises to the cytoplasm. The enzyme catalyses a (3R)-hydroxyacyl-[ACP] = a (2E)-enoyl-[ACP] + H2O. The catalysed reaction is (3R)-hydroxydecanoyl-[ACP] = (2E)-decenoyl-[ACP] + H2O. It catalyses the reaction (2E)-decenoyl-[ACP] = (3Z)-decenoyl-[ACP]. Its pathway is lipid metabolism; fatty acid biosynthesis. Its function is as follows. Necessary for the introduction of cis unsaturation into fatty acids. Catalyzes the dehydration of (3R)-3-hydroxydecanoyl-ACP to E-(2)-decenoyl-ACP and then its isomerization to Z-(3)-decenoyl-ACP. Can catalyze the dehydratase reaction for beta-hydroxyacyl-ACPs with saturated chain lengths up to 16:0, being most active on intermediate chain length. The protein is 3-hydroxydecanoyl-[acyl-carrier-protein] dehydratase of Maricaulis maris (strain MCS10) (Caulobacter maris).